The following is a 425-amino-acid chain: MLDLKKLRSNTEEVKKALSNRGEDFDVNVIDEVIALDEERRKILVDVEALKKQRNEVSAEIPKRKKAGEDVTEVMAEMREIGGKIKADDAKVAELNDKINYIMLRIPNIPNPAVPEGETDEDNVEIKRWGEPTKFNFEPKAHWDLGTDLDLLDFERGGKVAGSRFTVYKGMGARLERSIINYFLDKHTFENGYTEVLPPYMVNRDSMTGTGQLPKFEEDAFKVENNGYFLIPTAEVPVTNMYRNETLEGDKLPIKHAAYSACFRAEAGSAGRDTRGLIRQHQFNKVELVKFCKPEQSYEELDKLVQDAESVLQGLGLPYRIVRICKGDLGFTAALKYDIEVWMPSYNRYVEISSCSNFEDFQARRANIKYKNSPKEKPQFVHTLNGSGVAIGRTVAAILENYQQEDGSVVIPEALKEYMRCDLLK.

L-serine is bound at residue 233–235 (TAE). Position 264–266 (264–266 (RAE)) interacts with ATP. An L-serine-binding site is contributed by Glu287. Residue 351-354 (EISS) participates in ATP binding. Ser387 contributes to the L-serine binding site.

Belongs to the class-II aminoacyl-tRNA synthetase family. Type-1 seryl-tRNA synthetase subfamily. In terms of assembly, homodimer. The tRNA molecule binds across the dimer.

Its subcellular location is the cytoplasm. It carries out the reaction tRNA(Ser) + L-serine + ATP = L-seryl-tRNA(Ser) + AMP + diphosphate + H(+). The enzyme catalyses tRNA(Sec) + L-serine + ATP = L-seryl-tRNA(Sec) + AMP + diphosphate + H(+). The protein operates within aminoacyl-tRNA biosynthesis; selenocysteinyl-tRNA(Sec) biosynthesis; L-seryl-tRNA(Sec) from L-serine and tRNA(Sec): step 1/1. Catalyzes the attachment of serine to tRNA(Ser). Is also able to aminoacylate tRNA(Sec) with serine, to form the misacylated tRNA L-seryl-tRNA(Sec), which will be further converted into selenocysteinyl-tRNA(Sec). This Clostridium perfringens (strain ATCC 13124 / DSM 756 / JCM 1290 / NCIMB 6125 / NCTC 8237 / Type A) protein is Serine--tRNA ligase.